The following is a 185-amino-acid chain: Ribosome hibernation promotion factor (185 aa).

Residues 1-125 (MIKFNIRGEN…PLDTTDEVAE (125 aa)) are probably still associates with ribosome. The required but not sufficient to restore ribosome dimerization, in vitro will replace E.coli RMF in ribosome dimerization stretch occupies residues 126–185 (DHVDIVRTKHVALKPMDAEEAVLQMDMLGHDFYVFTDADSNGTHVVYRRTDGRYGLIETE).

This sequence belongs to the HPF/YfiA ribosome-associated protein family. Long HPF subfamily. In terms of assembly, interacts with 100S ribosomes in stationary phase; alters the relative position of the 30S and 50S subunits.

It is found in the cytoplasm. Required for dimerization of active 70S ribosomes into 100S ribosomes in stationary phase; 100S ribosomes are translationally inactive and sometimes present during exponential growth. Able to dimerize E.coli 70S ribosomes in vitro. This Lactococcus lactis subsp. cremoris (strain MG1363) protein is Ribosome hibernation promotion factor.